The primary structure comprises 102 residues: Large ribosomal subunit protein uL24 (102 aa).

This sequence belongs to the universal ribosomal protein uL24 family. In terms of assembly, part of the 50S ribosomal subunit.

In terms of biological role, one of two assembly initiator proteins, it binds directly to the 5'-end of the 23S rRNA, where it nucleates assembly of the 50S subunit. Its function is as follows. One of the proteins that surrounds the polypeptide exit tunnel on the outside of the subunit. This is Large ribosomal subunit protein uL24 from Ralstonia nicotianae (strain ATCC BAA-1114 / GMI1000) (Ralstonia solanacearum).